Here is a 111-residue protein sequence, read N- to C-terminus: Anti-adapter protein IraM (111 aa).

This sequence belongs to the IraM/RssC family.

It is found in the cytoplasm. In terms of biological role, involved in the stabilization of the sigma stress factor RpoS. This chain is Anti-adapter protein IraM, found in Cronobacter sakazakii (strain ATCC BAA-894) (Enterobacter sakazakii).